The sequence spans 335 residues: UDP-3-O-acylglucosamine N-acyltransferase (335 aa).

His-225 acts as the Proton acceptor in catalysis.

This sequence belongs to the transferase hexapeptide repeat family. LpxD subfamily. Homotrimer.

The enzyme catalyses a UDP-3-O-[(3R)-3-hydroxyacyl]-alpha-D-glucosamine + a (3R)-hydroxyacyl-[ACP] = a UDP-2-N,3-O-bis[(3R)-3-hydroxyacyl]-alpha-D-glucosamine + holo-[ACP] + H(+). Its pathway is bacterial outer membrane biogenesis; LPS lipid A biosynthesis. Its function is as follows. Catalyzes the N-acylation of UDP-3-O-acylglucosamine using 3-hydroxyacyl-ACP as the acyl donor. Is involved in the biosynthesis of lipid A, a phosphorylated glycolipid that anchors the lipopolysaccharide to the outer membrane of the cell. This Delftia acidovorans (strain DSM 14801 / SPH-1) protein is UDP-3-O-acylglucosamine N-acyltransferase.